Reading from the N-terminus, the 107-residue chain is DNA-directed RNA polymerase subunit omega (107 aa).

Residues 81–107 (MEEEAAKGNADAGQGEGDAPKTPGQDG) are disordered.

This sequence belongs to the RNA polymerase subunit omega family. As to quaternary structure, the RNAP catalytic core consists of 2 alpha, 1 beta, 1 beta' and 1 omega subunit. When a sigma factor is associated with the core the holoenzyme is formed, which can initiate transcription.

It carries out the reaction RNA(n) + a ribonucleoside 5'-triphosphate = RNA(n+1) + diphosphate. Promotes RNA polymerase assembly. Latches the N- and C-terminal regions of the beta' subunit thereby facilitating its interaction with the beta and alpha subunits. The sequence is that of DNA-directed RNA polymerase subunit omega from Alkalilimnicola ehrlichii (strain ATCC BAA-1101 / DSM 17681 / MLHE-1).